Here is an 807-residue protein sequence, read N- to C-terminus: Glycerol-3-phosphate acyltransferase (807 aa).

The HXXXXD motif signature appears at 308–313 (CHRSHM).

This sequence belongs to the GPAT/DAPAT family.

It localises to the cell inner membrane. It carries out the reaction sn-glycerol 3-phosphate + an acyl-CoA = a 1-acyl-sn-glycero-3-phosphate + CoA. Its pathway is phospholipid metabolism; CDP-diacylglycerol biosynthesis; CDP-diacylglycerol from sn-glycerol 3-phosphate: step 1/3. The protein is Glycerol-3-phosphate acyltransferase of Shewanella amazonensis (strain ATCC BAA-1098 / SB2B).